A 355-amino-acid chain; its full sequence is Methylthioribose-1-phosphate isomerase (355 aa).

Substrate-binding positions include 50-52 (RGA), R93, and Q198. D239 functions as the Proton donor in the catalytic mechanism. Residue 249–250 (NK) coordinates substrate.

The protein belongs to the eIF-2B alpha/beta/delta subunits family. MtnA subfamily. In terms of assembly, homodimer.

It carries out the reaction 5-(methylsulfanyl)-alpha-D-ribose 1-phosphate = 5-(methylsulfanyl)-D-ribulose 1-phosphate. It functions in the pathway amino-acid biosynthesis; L-methionine biosynthesis via salvage pathway; L-methionine from S-methyl-5-thio-alpha-D-ribose 1-phosphate: step 1/6. Functionally, catalyzes the interconversion of methylthioribose-1-phosphate (MTR-1-P) into methylthioribulose-1-phosphate (MTRu-1-P). In Geobacillus kaustophilus (strain HTA426), this protein is Methylthioribose-1-phosphate isomerase.